The following is a 62-amino-acid chain: Flavodoxin (62 aa).

A Flavodoxin-like domain is found at 4–62 (IGIFFGTDTGKTRKIAKMIHKQLGELADAPVNINRTTLDDFMAYPVLLLGTPTLGDGQL).

Belongs to the flavodoxin family. FMN serves as cofactor.

Functionally, low-potential electron donor to a number of redox enzymes. NifF is the electron donor to nitrogenase. The chain is Flavodoxin (nifF) from Klebsiella oxytoca.